Consider the following 92-residue polypeptide: CRISPR-associated endoribonuclease Cas2 3 (92 aa).

D9 lines the Mg(2+) pocket.

Belongs to the CRISPR-associated endoribonuclease Cas2 protein family. In terms of assembly, homodimer, forms a heterotetramer with a Cas1 homodimer. Requires Mg(2+) as cofactor.

CRISPR (clustered regularly interspaced short palindromic repeat), is an adaptive immune system that provides protection against mobile genetic elements (viruses, transposable elements and conjugative plasmids). CRISPR clusters contain sequences complementary to antecedent mobile elements and target invading nucleic acids. CRISPR clusters are transcribed and processed into CRISPR RNA (crRNA). Functions as a ssRNA-specific endoribonuclease. Involved in the integration of spacer DNA into the CRISPR cassette. This Synechocystis sp. (strain ATCC 27184 / PCC 6803 / Kazusa) protein is CRISPR-associated endoribonuclease Cas2 3.